The sequence spans 326 residues: tRNA-modifying protein YgfZ (326 aa).

2 residues coordinate folate: W27 and W189.

This sequence belongs to the tRNA-modifying YgfZ family.

It is found in the cytoplasm. Functionally, folate-binding protein involved in regulating the level of ATP-DnaA and in the modification of some tRNAs. It is probably a key factor in regulatory networks that act via tRNA modification, such as initiation of chromosomal replication. In Escherichia fergusonii (strain ATCC 35469 / DSM 13698 / CCUG 18766 / IAM 14443 / JCM 21226 / LMG 7866 / NBRC 102419 / NCTC 12128 / CDC 0568-73), this protein is tRNA-modifying protein YgfZ.